A 437-amino-acid chain; its full sequence is MTSFSPREIVSELDRYIVGQHEAKRAVAIALRNRWRRQQLPEGLREEVLPKNILMIGPTGVGKTEIARRLARLAQAPFLKVEATKFTEVGYVGRDVEQIIRDLVEIAIGLTRERLRKEVASKAELRAEDRVLEALVGANASGETRQKFRKMLREGQLNDREIEIQVQDTSVQGLPTFDVPGMPGAQMGMINLGDIFGKALGGRTKVRRMSVSESYDVLMAEESDKLLDQEKVVSEAIQSVEQNGIVFLDEIDKITARSEVRGGADVSREGVQRDLLPLIEGTTVNTKHGPVKTDHVLFIASGAFHLAKPSDLLPELQGRLPIRVELKALSQEDFRRILTEPEASLIKQYKALLATEGMTLDFTDDGIDELARLAADINRSVENIGARRLHTVLERLLEEISFTASDRSGESVTIDAAYVRGQLQGLAQNTDLSKFIL.

Residues V18, 60–65 (GVGKTE), D249, E315, and R387 each bind ATP.

This sequence belongs to the ClpX chaperone family. HslU subfamily. As to quaternary structure, a double ring-shaped homohexamer of HslV is capped on each side by a ring-shaped HslU homohexamer. The assembly of the HslU/HslV complex is dependent on binding of ATP.

It localises to the cytoplasm. Its function is as follows. ATPase subunit of a proteasome-like degradation complex; this subunit has chaperone activity. The binding of ATP and its subsequent hydrolysis by HslU are essential for unfolding of protein substrates subsequently hydrolyzed by HslV. HslU recognizes the N-terminal part of its protein substrates and unfolds these before they are guided to HslV for hydrolysis. This chain is ATP-dependent protease ATPase subunit HslU, found in Rhodospirillum centenum (strain ATCC 51521 / SW).